A 338-amino-acid chain; its full sequence is 2-methyl-6-phytyl-1,4-hydroquinone methyltransferase, chloroplastic (338 aa).

The transit peptide at 1 to 51 directs the protein to the chloroplast; that stretch reads MASLMLNGAITFPKGLGSPGSNLHARSIPRPTLLSVTRTSTPRLSVATRCS. Topologically, residues 52–307 are chloroplast intermembrane; that stretch reads SSSVSSSRPS…VNNPFSFLGR (256 aa). Residues 114–123 form an SAM motif I region; sequence VVDVGGGTGF. Positions 159 to 172 are SAM motif II; the sequence is CKIVEGDAEDLPFP. The tract at residues 200 to 213 is SAM motif III; it reads RVLKIGGKACLIGP. Residues 308–328 form a helical membrane-spanning segment; the sequence is FLLGTLAAAWFVLIPIYMWIK. Topologically, residues 329–338 are stromal; the sequence is DQIVPKDQPI.

It belongs to the class I-like SAM-binding methyltransferase superfamily. MPBQ/MBSQ MT family.

The protein resides in the plastid. It is found in the chloroplast inner membrane. It carries out the reaction 2-methyl-6-phytyl-1,4-benzene-1,4-diol + S-adenosyl-L-methionine = 2,3-dimethyl-6-phytylbenzene-1,4-diol + S-adenosyl-L-homocysteine + H(+). It catalyses the reaction 2-methyl-6-(all-trans-nonaprenyl)benzene-1,4-diol + S-adenosyl-L-methionine = plastoquinol-9 + S-adenosyl-L-homocysteine + H(+). The enzyme catalyses 6-geranylgeranyl-2-methylbenzene-1,4-diol + S-adenosyl-L-methionine = 6-geranylgeranyl-2,3-dimethylbenzene-1,4-diol + S-adenosyl-L-homocysteine + H(+). Its pathway is cofactor biosynthesis; tocopherol biosynthesis. Its function is as follows. Involved in a key methylation step in both tocopherols (vitamin E) and plastoquinone synthesis. Catalyzes the conversion of 2-methyl-6-phytyl-1,4-hydroquinone (MPBQ) to 2,3-dimethyl-6-phytyl-1,4-hydroquinone (DMPQ, a substrate for tocopherol cyclase), and 2-methyl-6-solanyl-1,4-benzoquinone (MSBQ) to plastoquinone. This Arabidopsis thaliana (Mouse-ear cress) protein is 2-methyl-6-phytyl-1,4-hydroquinone methyltransferase, chloroplastic (VTE3).